The primary structure comprises 118 residues: Ribosome-binding factor A (118 aa).

Belongs to the RbfA family. As to quaternary structure, monomer. Binds 30S ribosomal subunits, but not 50S ribosomal subunits or 70S ribosomes.

Its subcellular location is the cytoplasm. In terms of biological role, one of several proteins that assist in the late maturation steps of the functional core of the 30S ribosomal subunit. Associates with free 30S ribosomal subunits (but not with 30S subunits that are part of 70S ribosomes or polysomes). Required for efficient processing of 16S rRNA. May interact with the 5'-terminal helix region of 16S rRNA. The chain is Ribosome-binding factor A from Shouchella clausii (strain KSM-K16) (Alkalihalobacillus clausii).